The primary structure comprises 303 residues: Signal recognition particle receptor FtsY (303 aa).

Residues 108–115 (GVNGAGKT), 190–194 (DTAGR), and 254–257 (TKLD) contribute to the GTP site.

This sequence belongs to the GTP-binding SRP family. FtsY subfamily. Part of the signal recognition particle protein translocation system, which is composed of SRP and FtsY. SRP is a ribonucleoprotein composed of Ffh and a 4.5S RNA molecule.

The protein localises to the cell inner membrane. The protein resides in the cytoplasm. The catalysed reaction is GTP + H2O = GDP + phosphate + H(+). Its function is as follows. Involved in targeting and insertion of nascent membrane proteins into the cytoplasmic membrane. Acts as a receptor for the complex formed by the signal recognition particle (SRP) and the ribosome-nascent chain (RNC). Interaction with SRP-RNC leads to the transfer of the RNC complex to the Sec translocase for insertion into the membrane, the hydrolysis of GTP by both Ffh and FtsY, and the dissociation of the SRP-FtsY complex into the individual components. This is Signal recognition particle receptor FtsY from Rickettsia felis (strain ATCC VR-1525 / URRWXCal2) (Rickettsia azadi).